We begin with the raw amino-acid sequence, 1220 residues long: ATP-dependent helicase/deoxyribonuclease subunit B (1220 aa).

In terms of domain architecture, UvrD-like helicase ATP-binding spans 1–281 (MSMRFIVGRA…VFLTETHRFE (281 aa)). Position 8–15 (8–15 (GRAGTGKS)) interacts with ATP. Residues 283-590 (AGLKHLERFY…LVGSLDRSRN (308 aa)) form the UvrD-like helicase C-terminal domain. C788 is a binding site for [4Fe-4S] cluster. A disordered region spans residues 989 to 1008 (LAEGSKGSEGSEGSEDSEDS). [4Fe-4S] cluster contacts are provided by C1128, C1131, and C1137. Residues 1162 to 1171 (RVQSQDSEQY) are compositionally biased toward polar residues. Positions 1162–1220 (RVQSQDSEQYPEQHPPTSVPGETSRRALQKDGGNSPRGQELIWLGEDEAGAGKEDDGHE) are disordered. The segment covering 1211 to 1220 (GAGKEDDGHE) has biased composition (basic and acidic residues).

It belongs to the helicase family. AddB/RexB type 1 subfamily. Heterodimer of AddA and AddB. It depends on Mg(2+) as a cofactor. Requires [4Fe-4S] cluster as cofactor.

In terms of biological role, the heterodimer acts as both an ATP-dependent DNA helicase and an ATP-dependent, dual-direction single-stranded exonuclease. Recognizes the chi site generating a DNA molecule suitable for the initiation of homologous recombination. The AddB subunit has 5' -&gt; 3' nuclease activity but not helicase activity. In Desulfitobacterium hafniense (strain Y51), this protein is ATP-dependent helicase/deoxyribonuclease subunit B.